Here is a 653-residue protein sequence, read N- to C-terminus: Intermembrane lipid transfer protein vps13l (653 aa).

A B box-type zinc finger spans residues 5–49 (ISELKCQQHDKLVTIYCCACDAYFCKKCDKEKHSQDDNQEDSLHI). Residues Cys-10, His-13, Cys-32, and His-37 each contribute to the Zn(2+) site. 3 disordered regions span residues 159 to 232 (NLID…NRKK), 248 to 420 (HILN…EDDS), and 627 to 653 (EKSN…PNEN). Low complexity predominate over residues 195–213 (SPSPSRSSESNSTTNNNNN). Acidic residues predominate over residues 266-277 (DYDDDDDNDDDN). Over residues 278–293 (NNNNNNNNNNNNNNNN) the composition is skewed to low complexity. A compositionally biased stretch (basic and acidic residues) spans 314–330 (ETEKEIENVENKIDNKP). Residues 366 to 381 (IFEEEEEEEEDEDEVG) show a composition bias toward acidic residues.

Belongs to the VPS13 family.

It localises to the membrane. Mediates the transfer of lipids between membranes at organelle contact sites. This is Intermembrane lipid transfer protein vps13l (vps13l) from Dictyostelium discoideum (Social amoeba).